The following is a 357-amino-acid chain: NADH-quinone oxidoreductase subunit H (357 aa).

A run of 8 helical transmembrane segments spans residues 25-45 (ILII…VVAY), 94-114 (IYLF…VWVV), 130-150 (LLYV…AGWA), 166-186 (LLVS…MIAG), 201-221 (IIYW…ISAL), 254-274 (FFLA…VMFF), 294-314 (VPGI…YLWV), and 329-349 (LSWK…ALMT).

Belongs to the complex I subunit 1 family. As to quaternary structure, NDH-1 is composed of 14 different subunits. Subunits NuoA, H, J, K, L, M, N constitute the membrane sector of the complex.

The protein resides in the cell inner membrane. The catalysed reaction is a quinone + NADH + 5 H(+)(in) = a quinol + NAD(+) + 4 H(+)(out). NDH-1 shuttles electrons from NADH, via FMN and iron-sulfur (Fe-S) centers, to quinones in the respiratory chain. The immediate electron acceptor for the enzyme in this species is believed to be ubiquinone. Couples the redox reaction to proton translocation (for every two electrons transferred, four hydrogen ions are translocated across the cytoplasmic membrane), and thus conserves the redox energy in a proton gradient. This subunit may bind ubiquinone. This chain is NADH-quinone oxidoreductase subunit H, found in Ruthia magnifica subsp. Calyptogena magnifica.